The sequence spans 196 residues: ATP-dependent Clp protease proteolytic subunit (196 aa).

The Nucleophile role is filled by serine 98. Histidine 123 is a catalytic residue.

The protein belongs to the peptidase S14 family. As to quaternary structure, fourteen ClpP subunits assemble into 2 heptameric rings which stack back to back to give a disk-like structure with a central cavity, resembling the structure of eukaryotic proteasomes.

It localises to the cytoplasm. It catalyses the reaction Hydrolysis of proteins to small peptides in the presence of ATP and magnesium. alpha-casein is the usual test substrate. In the absence of ATP, only oligopeptides shorter than five residues are hydrolyzed (such as succinyl-Leu-Tyr-|-NHMec, and Leu-Tyr-Leu-|-Tyr-Trp, in which cleavage of the -Tyr-|-Leu- and -Tyr-|-Trp bonds also occurs).. Its function is as follows. Cleaves peptides in various proteins in a process that requires ATP hydrolysis. Has a chymotrypsin-like activity. Plays a major role in the degradation of misfolded proteins. ClpXP is involved in the complete degradation of the Site-2 clipped anti-sigma-W factor RsiW. This results in the release of SigW and the transcription activation of the genes under the control of the sigma-W factor. The polypeptide is ATP-dependent Clp protease proteolytic subunit (Geobacillus kaustophilus (strain HTA426)).